A 429-amino-acid polypeptide reads, in one-letter code: Phosphoribosylamine--glycine ligase (429 aa).

The 208-residue stretch at 109–316 folds into the ATP-grasp domain; it reads KDFLARHQIP…LVDLCLAAID (208 aa). Position 135–196 (135–196) interacts with ATP; sequence VREQGAPIVV…EEFLDGEEAS (62 aa). The disordered stretch occupies residues 212–235; it reads SQDHKRVGDKDTGPNTGGMGAYSP. The span at 213–223 shows a compositional bias: basic and acidic residues; it reads QDHKRVGDKDT. 2 residues coordinate Mg(2+): Glu-286 and Asn-288.

The protein belongs to the GARS family. The cofactor is Mg(2+). Mn(2+) is required as a cofactor.

The catalysed reaction is 5-phospho-beta-D-ribosylamine + glycine + ATP = N(1)-(5-phospho-beta-D-ribosyl)glycinamide + ADP + phosphate + H(+). Its pathway is purine metabolism; IMP biosynthesis via de novo pathway; N(1)-(5-phospho-D-ribosyl)glycinamide from 5-phospho-alpha-D-ribose 1-diphosphate: step 2/2. This is Phosphoribosylamine--glycine ligase from Vibrio parahaemolyticus serotype O3:K6 (strain RIMD 2210633).